Consider the following 994-residue polypeptide: Glycine dehydrogenase (decarboxylating) (994 aa).

Residues 1–20 (MTDHAENRCGLEGPRPFSSR) are disordered. Position 716 is an N6-(pyridoxal phosphate)lysine (K716).

This sequence belongs to the GcvP family. As to quaternary structure, the glycine cleavage system is composed of four proteins: P, T, L and H. It depends on pyridoxal 5'-phosphate as a cofactor.

The enzyme catalyses N(6)-[(R)-lipoyl]-L-lysyl-[glycine-cleavage complex H protein] + glycine + H(+) = N(6)-[(R)-S(8)-aminomethyldihydrolipoyl]-L-lysyl-[glycine-cleavage complex H protein] + CO2. In terms of biological role, the glycine cleavage system catalyzes the degradation of glycine. The P protein binds the alpha-amino group of glycine through its pyridoxal phosphate cofactor; CO(2) is released and the remaining methylamine moiety is then transferred to the lipoamide cofactor of the H protein. The chain is Glycine dehydrogenase (decarboxylating) from Cutibacterium acnes (strain DSM 16379 / KPA171202) (Propionibacterium acnes).